Here is a 450-residue protein sequence, read N- to C-terminus: Putative zinc metalloprotease PA3649 (450 aa).

H21 contacts Zn(2+). The active site involves E22. Position 25 (H25) interacts with Zn(2+). The helical transmembrane segment at 97–119 (IAIVAAGPIANFLLAILFFWVVA) threads the bilayer. One can recognise a PDZ domain in the interval 199-291 (GWLKGEDNPD…VLDVALELAV (93 aa)). Residues 425-444 (AWGMQIGISLVVGVMLLALV) traverse the membrane as a helical segment.

The protein belongs to the peptidase M50B family. Zn(2+) serves as cofactor.

It localises to the cell inner membrane. In Pseudomonas aeruginosa (strain ATCC 15692 / DSM 22644 / CIP 104116 / JCM 14847 / LMG 12228 / 1C / PRS 101 / PAO1), this protein is Putative zinc metalloprotease PA3649.